A 517-amino-acid polypeptide reads, in one-letter code: Crotonobetaine/carnitine--CoA ligase (517 aa).

It belongs to the ATP-dependent AMP-binding enzyme family.

The enzyme catalyses 4-(trimethylamino)butanoate + ATP + CoA = 4-(trimethylamino)butanoyl-CoA + AMP + diphosphate. It catalyses the reaction crotonobetaine + ATP + CoA = crotonobetainyl-CoA + AMP + diphosphate. The catalysed reaction is (R)-carnitine + ATP + CoA = (R)-carnitinyl-CoA + AMP + diphosphate. It functions in the pathway amine and polyamine metabolism; carnitine metabolism. Functionally, catalyzes the transfer of CoA to carnitine, generating the initial carnitinyl-CoA needed for the CaiB reaction cycle. Also has activity toward crotonobetaine and gamma-butyrobetaine. The polypeptide is Crotonobetaine/carnitine--CoA ligase (Salmonella heidelberg (strain SL476)).